A 270-amino-acid chain; its full sequence is Alpha N-terminal protein methyltransferase 1 (270 aa).

S-adenosyl-L-methionine is bound by residues Gly-114, Arg-119, 137 to 139 (EQN), 165 to 166 (LQ), and Gln-180.

It belongs to the methyltransferase superfamily. NTM1 family.

The catalysed reaction is N-terminal L-alanyl-L-prolyl-L-lysyl-[protein] + 3 S-adenosyl-L-methionine = N-terminal N,N,N-trimethyl-L-alanyl-L-prolyl-L-lysyl-[protein] + 3 S-adenosyl-L-homocysteine + 3 H(+). It catalyses the reaction N-terminal L-seryl-L-prolyl-L-lysyl-[protein] + 3 S-adenosyl-L-methionine = N-terminal N,N,N-trimethyl-L-seryl-L-prolyl-L-lysyl-[protein] + 3 S-adenosyl-L-homocysteine + 3 H(+). It carries out the reaction N-terminal L-prolyl-L-prolyl-L-lysyl-[protein] + 2 S-adenosyl-L-methionine = N-terminal N,N-dimethyl-L-prolyl-L-prolyl-L-lysyl-[protein] + 2 S-adenosyl-L-homocysteine + 2 H(+). In terms of biological role, alpha-N-methyltransferase that methylates the N-terminus of target proteins containing the N-terminal motif [Ala/Pro/Ser]-Pro-Lys when the initiator Met is cleaved. Specifically catalyzes mono-, di- or tri-methylation of exposed alpha-amino group of Ala or Ser residue in the [Ala/Ser]-Pro-Lys motif and mono- or di-methylation of Pro in the Pro-Pro-Lys motif. The polypeptide is Alpha N-terminal protein methyltransferase 1 (Dictyostelium discoideum (Social amoeba)).